Here is a 394-residue protein sequence, read N- to C-terminus: Phosphoglycerate kinase (394 aa).

Substrate is bound by residues 21-23 (DFN), R36, 59-62 (HLGR), R118, and R151. At S183 the chain carries Phosphoserine. Residues K201 and G292 each coordinate ATP. Phosphothreonine is present on T299. ATP is bound by residues E323 and 350–353 (GGDS).

It belongs to the phosphoglycerate kinase family. As to quaternary structure, monomer.

The protein resides in the cytoplasm. The enzyme catalyses (2R)-3-phosphoglycerate + ATP = (2R)-3-phospho-glyceroyl phosphate + ADP. Its pathway is carbohydrate degradation; glycolysis; pyruvate from D-glyceraldehyde 3-phosphate: step 2/5. The sequence is that of Phosphoglycerate kinase from Anoxybacillus flavithermus (strain DSM 21510 / WK1).